Here is a 600-residue protein sequence, read N- to C-terminus: Malto-oligosyltrehalose trehalohydrolase (600 aa).

The tract at residues 1–34 (MTQTQPVTPTPPASFQTQHDPRTRLGATPLPGGA) is disordered. Residue 273–278 (RLDATP) participates in substrate binding. Catalysis depends on Asp275, which acts as the Nucleophile. Glu308 serves as the catalytic Proton donor. Residues 328 to 332 (DDFHH), Glu376, and 399 to 404 (HDQIGN) contribute to the substrate site.

The protein belongs to the glycosyl hydrolase 13 family. In terms of assembly, monomer.

The protein localises to the cytoplasm. The enzyme catalyses hydrolysis of (1-&gt;4)-alpha-D-glucosidic linkage in 4-alpha-D-[(1-&gt;4)-alpha-D-glucanosyl]n trehalose to yield trehalose and (1-&gt;4)-alpha-D-glucan.. The protein operates within glycan biosynthesis; trehalose biosynthesis. In Deinococcus radiodurans (strain ATCC 13939 / DSM 20539 / JCM 16871 / CCUG 27074 / LMG 4051 / NBRC 15346 / NCIMB 9279 / VKM B-1422 / R1), this protein is Malto-oligosyltrehalose trehalohydrolase (treZ).